Reading from the N-terminus, the 469-residue chain is Cytochrome P450 85A1 (469 aa).

Residues 1–21 traverse the membrane as a helical segment; it reads MVLVAIGVVVAAAVVVSSLLL. Residue Cys419 participates in heme binding.

Belongs to the cytochrome P450 family. The cofactor is heme. In terms of tissue distribution, expressed at low levels in all the tissues, but preferentially in the leaf sheath.

It localises to the membrane. The catalysed reaction is 6-deoxoteasterone + reduced [NADPH--hemoprotein reductase] + O2 = 6alpha-hydroxyteasterone + oxidized [NADPH--hemoprotein reductase] + H2O + H(+). It catalyses the reaction 6alpha-hydroxytyphasterol + reduced [NADPH--hemoprotein reductase] + O2 = teasterone + oxidized [NADPH--hemoprotein reductase] + 2 H2O + H(+). The enzyme catalyses 3-dehydro-6-deoxoteasterone + reduced [NADPH--hemoprotein reductase] + O2 = 3-dehydro-6alpha-hydroxyteasterone + oxidized [NADPH--hemoprotein reductase] + H2O + H(+). It carries out the reaction 3-dehydro-6alpha-hydroxyteasterone + reduced [NADPH--hemoprotein reductase] + O2 = 3-dehydroteasterone + oxidized [NADPH--hemoprotein reductase] + 2 H2O + H(+). The catalysed reaction is 6-deoxotyphasterol + reduced [NADPH--hemoprotein reductase] + O2 = 6alpha-hydroxytyphasterol + oxidized [NADPH--hemoprotein reductase] + H2O + H(+). It catalyses the reaction 6alpha-hydroxytyphasterol + reduced [NADPH--hemoprotein reductase] + O2 = typhasterol + oxidized [NADPH--hemoprotein reductase] + 2 H2O + H(+). The enzyme catalyses 3-dehydro-6-deoxoteasterone + 2 reduced [NADPH--hemoprotein reductase] + 2 O2 = 3-dehydroteasterone + 2 oxidized [NADPH--hemoprotein reductase] + 3 H2O + 2 H(+). It carries out the reaction 6-deoxoteasterone + 2 reduced [NADPH--hemoprotein reductase] + 2 O2 = teasterone + 2 oxidized [NADPH--hemoprotein reductase] + 3 H2O + 2 H(+). The catalysed reaction is 6-deoxotyphasterol + 2 reduced [NADPH--hemoprotein reductase] + 2 O2 = typhasterol + 2 oxidized [NADPH--hemoprotein reductase] + 3 H2O + 2 H(+). It participates in plant hormone biosynthesis; brassinosteroid biosynthesis. Functionally, catalyzes the C6-oxidation step in brassinosteroids biosynthesis. May convert 6-deoxoteasterone (6-deoxoTE) to teasterone (TE), 3-dehydro-6-deoxoteasterone (6-deoxo3DT, 6-deoxo3DHT) to 3-dehydroteasterone (3DT, 3-DHT), and 6-deoxotyphasterol (6-deoxoTY) to typhasterol (TY). Involved in the organization and elongation of the leaf and stem cells. Not able to convert 6-deoxocastasterone (6-deoxoCS) and castasterone (CS) to brassinolide (BL). The sequence is that of Cytochrome P450 85A1 from Oryza sativa subsp. japonica (Rice).